We begin with the raw amino-acid sequence, 603 residues long: Elongation factor 4 (603 aa).

In terms of domain architecture, tr-type G spans 6–188 (SKIRNFCIIA…QIVKKIPAPT (183 aa)). GTP-binding positions include 18-23 (DHGKST) and 135-138 (NKVD).

The protein belongs to the TRAFAC class translation factor GTPase superfamily. Classic translation factor GTPase family. LepA subfamily.

It is found in the cell membrane. It catalyses the reaction GTP + H2O = GDP + phosphate + H(+). Functionally, required for accurate and efficient protein synthesis under certain stress conditions. May act as a fidelity factor of the translation reaction, by catalyzing a one-codon backward translocation of tRNAs on improperly translocated ribosomes. Back-translocation proceeds from a post-translocation (POST) complex to a pre-translocation (PRE) complex, thus giving elongation factor G a second chance to translocate the tRNAs correctly. Binds to ribosomes in a GTP-dependent manner. The protein is Elongation factor 4 of Agathobacter rectalis (strain ATCC 33656 / DSM 3377 / JCM 17463 / KCTC 5835 / VPI 0990) (Eubacterium rectale).